Here is a 206-residue protein sequence, read N- to C-terminus: MGGTFDPIHHGHLVAASEVAAKFGLDEVVFVPTGQPWQKSHKLVSRPEHRYLMTVIATASNPRFTVSRVDVDRPGPTFTIDTLRDLRAERPDADLFFITGADALAQILSWKDVDELWSLAHFVGVTRPGHELHDMGRDDVSLLEVPAMAISSTDCRTRVGAGNPVWYLVPDGVVQYIAKYGLYAAPANAADLTPALSGSDDQARTE.

This sequence belongs to the NadD family.

It carries out the reaction nicotinate beta-D-ribonucleotide + ATP + H(+) = deamido-NAD(+) + diphosphate. It functions in the pathway cofactor biosynthesis; NAD(+) biosynthesis; deamido-NAD(+) from nicotinate D-ribonucleotide: step 1/1. In terms of biological role, catalyzes the reversible adenylation of nicotinate mononucleotide (NaMN) to nicotinic acid adenine dinucleotide (NaAD). The chain is Probable nicotinate-nucleotide adenylyltransferase from Paenarthrobacter aurescens (strain TC1).